A 243-amino-acid polypeptide reads, in one-letter code: DNA repair protein RecO (243 aa).

Belongs to the RecO family.

Its function is as follows. Involved in DNA repair and RecF pathway recombination. In Phenylobacterium zucineum (strain HLK1), this protein is DNA repair protein RecO.